Reading from the N-terminus, the 449-residue chain is UDP-N-acetylmuramate--L-alanine ligase (449 aa).

121–127 is an ATP binding site; the sequence is GAHGKSS.

Belongs to the MurCDEF family.

It is found in the cytoplasm. The catalysed reaction is UDP-N-acetyl-alpha-D-muramate + L-alanine + ATP = UDP-N-acetyl-alpha-D-muramoyl-L-alanine + ADP + phosphate + H(+). The protein operates within cell wall biogenesis; peptidoglycan biosynthesis. Functionally, cell wall formation. This is UDP-N-acetylmuramate--L-alanine ligase from Helicobacter pylori (strain HPAG1).